Here is a 71-residue protein sequence, read N- to C-terminus: Cytochrome c oxidase subunit 8C, mitochondrial (71 aa).

The N-terminal 28 residues, 1–28 (MAHLPRVCPFIRRLRVALLCLRPGHRFA), are a transit peptide targeting the mitochondrion. Over 29 to 39 (HSEPQRQRPAS) the chain is Mitochondrial matrix. The helical transmembrane segment at 40–63 (ALEMAVGIVVIFSAFLTPSAYVLS) threads the bilayer. Topologically, residues 64–71 (NLSQFRRE) are mitochondrial intermembrane.

This sequence belongs to the cytochrome c oxidase VIII family. As to quaternary structure, component of the cytochrome c oxidase (complex IV, CIV), a multisubunit enzyme composed of 14 subunits. The complex is composed of a catalytic core of 3 subunits MT-CO1, MT-CO2 and MT-CO3, encoded in the mitochondrial DNA, and 11 supernumerary subunits COX4I, COX5A, COX5B, COX6A, COX6B, COX6C, COX7A, COX7B, COX7C, COX8 and NDUFA4, which are encoded in the nuclear genome. The complex exists as a monomer or a dimer and forms supercomplexes (SCs) in the inner mitochondrial membrane with NADH-ubiquinone oxidoreductase (complex I, CI) and ubiquinol-cytochrome c oxidoreductase (cytochrome b-c1 complex, complex III, CIII), resulting in different assemblies (supercomplex SCI(1)III(2)IV(1) and megacomplex MCI(2)III(2)IV(2)).

It localises to the mitochondrion inner membrane. It participates in energy metabolism; oxidative phosphorylation. Its function is as follows. Component of the cytochrome c oxidase, the last enzyme in the mitochondrial electron transport chain which drives oxidative phosphorylation. The respiratory chain contains 3 multisubunit complexes succinate dehydrogenase (complex II, CII), ubiquinol-cytochrome c oxidoreductase (cytochrome b-c1 complex, complex III, CIII) and cytochrome c oxidase (complex IV, CIV), that cooperate to transfer electrons derived from NADH and succinate to molecular oxygen, creating an electrochemical gradient over the inner membrane that drives transmembrane transport and the ATP synthase. Cytochrome c oxidase is the component of the respiratory chain that catalyzes the reduction of oxygen to water. Electrons originating from reduced cytochrome c in the intermembrane space (IMS) are transferred via the dinuclear copper A center (CU(A)) of subunit 2 and heme A of subunit 1 to the active site in subunit 1, a binuclear center (BNC) formed by heme A3 and copper B (CU(B)). The BNC reduces molecular oxygen to 2 water molecules using 4 electrons from cytochrome c in the IMS and 4 protons from the mitochondrial matrix. The polypeptide is Cytochrome c oxidase subunit 8C, mitochondrial (COX8C) (Eulemur fulvus fulvus (Brown lemur)).